We begin with the raw amino-acid sequence, 125 residues long: Casein kinase I isoform alpha (125 aa).

Residues 1–125 enclose the Protein kinase domain; sequence GEEVAVKLES…LIDFGLAKKY (125 aa). ATP is bound at residue K7. The active-site Proton acceptor is the D97.

The protein belongs to the protein kinase superfamily. CK1 Ser/Thr protein kinase family. Casein kinase I subfamily. In terms of assembly, interacts with the Axin complex. Interacts with TUT1, leading to TUT1 phosphorylation. Interacts with FAM83A, FAM83B, FAM83C, FAM83D, FAM83E, FAM83F, FAM83G and FAM83H (via DUF1669). Interaction with FAM83H recruits CSNK1A1 to keratin filaments. Phosphorylated by MTOR in response to mitogenic stimulation, leading to its activation.

The protein resides in the cytoplasm. It localises to the cytoskeleton. It is found in the microtubule organizing center. Its subcellular location is the centrosome. The protein localises to the chromosome. The protein resides in the centromere. It localises to the kinetochore. It is found in the nucleus speckle. Its subcellular location is the cilium basal body. The protein localises to the spindle. The catalysed reaction is L-seryl-[protein] + ATP = O-phospho-L-seryl-[protein] + ADP + H(+). The enzyme catalyses L-threonyl-[protein] + ATP = O-phospho-L-threonyl-[protein] + ADP + H(+). Its function is as follows. Casein kinases are operationally defined by their preferential utilization of acidic proteins such as caseins as substrates. It can phosphorylate a large number of proteins. Participates in Wnt signaling. Phosphorylates CTNNB1 at 'Ser-45'. May phosphorylate PER1 and PER2. May play a role in segregating chromosomes during mitosis. May play a role in keratin cytoskeleton disassembly and thereby, it may regulate epithelial cell migration. Acts as a positive regulator of mTORC1 and mTORC2 signaling in response to nutrients by mediating phosphorylation of DEPTOR inhibitor. Acts as an inhibitor of NLRP3 inflammasome assembly by mediating phosphorylation of NLRP3. The polypeptide is Casein kinase I isoform alpha (CSNK1A1) (Sus scrofa (Pig)).